We begin with the raw amino-acid sequence, 337 residues long: NADH-quinone oxidoreductase subunit H (337 aa).

8 helical membrane-spanning segments follow: residues 13–33, 82–102, 115–135, 154–174, 187–207, 248–268, 274–294, and 313–333; these read IIIV…IAYL, AVFI…WAVI, VGVL…IMAG, MVSY…SAGS, GVWY…SILA, ILMS…PVDI, IPGI…FLWV, and VFLP…VTFD.

This sequence belongs to the complex I subunit 1 family. As to quaternary structure, NDH-1 is composed of 14 different subunits. Subunits NuoA, H, J, K, L, M, N constitute the membrane sector of the complex.

It localises to the cell inner membrane. The catalysed reaction is a quinone + NADH + 5 H(+)(in) = a quinol + NAD(+) + 4 H(+)(out). In terms of biological role, NDH-1 shuttles electrons from NADH, via FMN and iron-sulfur (Fe-S) centers, to quinones in the respiratory chain. The immediate electron acceptor for the enzyme in this species is believed to be ubiquinone. Couples the redox reaction to proton translocation (for every two electrons transferred, four hydrogen ions are translocated across the cytoplasmic membrane), and thus conserves the redox energy in a proton gradient. This subunit may bind ubiquinone. The protein is NADH-quinone oxidoreductase subunit H of Rhodospirillum rubrum (strain ATCC 11170 / ATH 1.1.1 / DSM 467 / LMG 4362 / NCIMB 8255 / S1).